The following is a 266-amino-acid chain: Thymidylate synthase (266 aa).

DUMP is bound at residue Arg-24. Position 54 (His-54) interacts with (6R)-5,10-methylene-5,6,7,8-tetrahydrofolate. Position 129–130 (129–130 (RR)) interacts with dUMP. Cys-149 functions as the Nucleophile in the catalytic mechanism. Residues 169–172 (RSAD), Asn-180, and 210–212 (HIY) each bind dUMP. Asp-172 is a binding site for (6R)-5,10-methylene-5,6,7,8-tetrahydrofolate. Ala-265 is a (6R)-5,10-methylene-5,6,7,8-tetrahydrofolate binding site.

Belongs to the thymidylate synthase family. Bacterial-type ThyA subfamily. Homodimer.

It localises to the cytoplasm. The enzyme catalyses dUMP + (6R)-5,10-methylene-5,6,7,8-tetrahydrofolate = 7,8-dihydrofolate + dTMP. Its pathway is pyrimidine metabolism; dTTP biosynthesis. Its function is as follows. Catalyzes the reductive methylation of 2'-deoxyuridine-5'-monophosphate (dUMP) to 2'-deoxythymidine-5'-monophosphate (dTMP) while utilizing 5,10-methylenetetrahydrofolate (mTHF) as the methyl donor and reductant in the reaction, yielding dihydrofolate (DHF) as a by-product. This enzymatic reaction provides an intracellular de novo source of dTMP, an essential precursor for DNA biosynthesis. This Mycobacterium leprae (strain TN) protein is Thymidylate synthase.